The sequence spans 783 residues: Protein DWD HYPERSENSITIVE TO UV-B 1 (783 aa).

2 WD repeats span residues glycine 145–proline 198 and serine 212–leucine 256. The short motif at arginine 382–arginine 389 is the Nuclear localization signal element. WD repeat units lie at residues aspartate 439–tyrosine 480, glycine 485–threonine 525, aspartate 538–valine 577, methionine 581–cysteine 621, serine 625–asparagine 664, and glutamate 666–arginine 710.

Interacts directly with DDB1A. Binds to COP1 and RUP1.

Its subcellular location is the nucleus. Its function is as follows. May act as a substrate receptor of a CUL4-RING E3 ubiquitin-protein ligase (CRL4) complex involved in the negative regulation of cellular responses to ultraviolet-B (UV-B) illumination, likely in coordination with RUP1. Interacts with COP1 and probably prevents the formation of active UVR8-COP1 complex, thus avoiding UVR8-COP1-mediated positive regulation of UV-B responses. The polypeptide is Protein DWD HYPERSENSITIVE TO UV-B 1 (Arabidopsis thaliana (Mouse-ear cress)).